Here is a 162-residue protein sequence, read N- to C-terminus: Protein-export protein SecB 2 (162 aa).

This sequence belongs to the SecB family. As to quaternary structure, homotetramer, a dimer of dimers. One homotetramer interacts with 1 SecA dimer.

The protein localises to the cytoplasm. One of the proteins required for the normal export of preproteins out of the cell cytoplasm. It is a molecular chaperone that binds to a subset of precursor proteins, maintaining them in a translocation-competent state. It also specifically binds to its receptor SecA. The protein is Protein-export protein SecB 2 of Polaromonas naphthalenivorans (strain CJ2).